The primary structure comprises 400 residues: Cytohesin-2 (400 aa).

Positions 10-67 (DLTPEERMELENIRRRKQELLVEIQRLREELSEAMSEVEGLEANEGSKTLQRNRKMAM) form a coiled coil. One can recognise an SEC7 domain in the interval 72–201 (FNMDPKKGIQ…VIMLNTSLHN (130 aa)). The 118-residue stretch at 259–376 (NPDREGWLLK…WIKSIQAAVS (118 aa)) folds into the PH domain. Residues 268-276 (KLGGGRVKT), Arg280, Tyr291, Arg301, Lys339, Asn350, and His351 each bind a 1,2-diacyl-sn-glycero-3-phospho-(1D-myo-inositol-3,4,5-trisphosphate). The C-terminal autoinhibitory region stretch occupies residues 387-395 (RKKRISVKK).

Heteromer. Composed of TAMALIN, CYTH2 and at least one GRM1. Interacts with ARRB1. Interacts with ARL4D; the interaction is direct. Directly interacts with CCDC120 through the coiled coil domain; this interaction stabilizes CCDC120, possibly by preventing its ubiquitination, and is required for neurite growth in a neuroblastoma cell line. Interacts with FRMD4A. Interacts (via N-terminal domain) with INAVA (via N-terminal domain). In terms of tissue distribution, present in all tissues tested, with highest protein levels in brain and adrenal.

Its subcellular location is the cell membrane. It is found in the cytoplasm. The protein localises to the cell projection. It localises to the growth cone. The protein resides in the cell junction. Its subcellular location is the tight junction. It is found in the adherens junction. In terms of biological role, acts as a guanine-nucleotide exchange factor (GEF). Promotes guanine-nucleotide exchange on ARF1, ARF3 and ARF6. Activates ARF factors through replacement of GDP with GTP. The cell membrane form, in association with ARL4 proteins, recruits ARF6 to the plasma membrane. Involved in neurite growth. The sequence is that of Cytohesin-2 (Cyth2) from Mus musculus (Mouse).